A 288-amino-acid chain; its full sequence is Shikimate dehydrogenase (NADP(+)) (288 aa).

Shikimate-binding positions include 22 to 24 (SLS) and Thr69. Lys73 serves as the catalytic Proton acceptor. Shikimate-binding residues include Asn94 and Asp110. NADP(+) contacts are provided by residues 131-135 (GSGGA) and Leu228. Residue Tyr230 participates in shikimate binding. Gly251 is an NADP(+) binding site.

It belongs to the shikimate dehydrogenase family. Homodimer.

It catalyses the reaction shikimate + NADP(+) = 3-dehydroshikimate + NADPH + H(+). It participates in metabolic intermediate biosynthesis; chorismate biosynthesis; chorismate from D-erythrose 4-phosphate and phosphoenolpyruvate: step 4/7. Involved in the biosynthesis of the chorismate, which leads to the biosynthesis of aromatic amino acids. Catalyzes the reversible NADPH linked reduction of 3-dehydroshikimate (DHSA) to yield shikimate (SA). The protein is Shikimate dehydrogenase (NADP(+)) of Synechococcus sp. (strain JA-2-3B'a(2-13)) (Cyanobacteria bacterium Yellowstone B-Prime).